The sequence spans 621 residues: Zinc metalloproteinase-disintegrin-like NaMP (621 aa).

Positions 1-20 (MIQPLLVAICLVVFPYQGSS) are cleaved as a signal peptide. The propeptide occupies 21–188 (TILESGKVRD…GESDETIKKI (168 aa)). The 197-residue stretch at 206 to 402 (KHIELYMVAD…KSAQCILNDP (197 aa)) folds into the Peptidase M12B domain. 3 N-linked (GlcNAc...) asparagine glycosylation sites follow: Asn225, Asn268, and Asn319. Disulfide bonds link Cys317–Cys397, Cys357–Cys381, Cys359–Cys364, Cys413–Cys442, Cys424–Cys437, Cys426–Cys432, Cys436–Cys459, Cys450–Cys456, Cys455–Cys481, Cys468–Cys488, Cys475–Cys507, Cys500–Cys512, Cys519–Cys569, Cys534–Cys579, Cys547–Cys557, Cys564–Cys605, and Cys599–Cys610. Residue His342 coordinates Zn(2+). The active site involves Glu343. Zn(2+) contacts are provided by His346 and His352. Positions 410–496 (TAICGNGFVE…ECPMNHFHMN (87 aa)) constitute a Disintegrin domain. The short motif at 474–476 (DCD) is the D/ECD-tripeptide element. Asn551 carries N-linked (GlcNAc...) asparagine glycosylation.

This sequence belongs to the venom metalloproteinase (M12B) family. P-III subfamily. P-IIIa sub-subfamily. Monomer. The cofactor is Zn(2+). As to expression, expressed by the venom gland.

The protein localises to the secreted. Functionally, snake venom zinc metalloproteinase that inhibits platelet aggregation and degrades fibrinogen. In Naja atra (Chinese cobra), this protein is Zinc metalloproteinase-disintegrin-like NaMP.